The following is a 454-amino-acid chain: Mitochondrial dynamics protein MID49 (454 aa).

Over 1–22 (MAEFSQKRGKRRGDEGLGSMVD) the chain is Mitochondrial intermembrane. The chain crosses the membrane as a helical span at residues 23 to 43 (FLLANARLVLGVGGAAVLGIA). The Cytoplasmic portion of the chain corresponds to 44-454 (TLAVKRFIDR…SGLQEPEGLL (411 aa)). The segment at 76–119 (ATPHLQPRPPPAALSQPVLPLAPSSSAPEGPAKSDPEVTPQLSS) is disordered. The segment covering 88–108 (ALSQPVLPLAPSSSAPEGPAK) has biased composition (low complexity).

Belongs to the MID49/MID51 family. Interacts with DNM1L.

It localises to the mitochondrion outer membrane. Mitochondrial outer membrane protein which regulates mitochondrial organization. It is required for mitochondrial fission and promotes the recruitment and association of the fission mediator dynamin-related protein 1 (DNM1L) to the mitochondrial surface independently of the mitochondrial fission FIS1 and MFF proteins. Regulates DNM1L GTPase activity. The protein is Mitochondrial dynamics protein MID49 (MIEF2) of Pongo abelii (Sumatran orangutan).